A 222-amino-acid polypeptide reads, in one-letter code: Small ribosomal subunit protein uS3 (222 aa).

Positions 39–108 constitute a KH type-2 domain; sequence IRRHIKEKLY…TISLDIKEIK (70 aa).

Belongs to the universal ribosomal protein uS3 family. Part of the 30S ribosomal subunit. Forms a tight complex with proteins S10 and S14.

Its function is as follows. Binds the lower part of the 30S subunit head. Binds mRNA in the 70S ribosome, positioning it for translation. The protein is Small ribosomal subunit protein uS3 of Caldicellulosiruptor bescii (strain ATCC BAA-1888 / DSM 6725 / KCTC 15123 / Z-1320) (Anaerocellum thermophilum).